The following is an 846-amino-acid chain: Putative transcriptional regulator tpeD (846 aa).

A BED-type; degenerate zinc finger spans residues 104–166; that stretch reads KHQSECWQHF…NCRKSVPVSK (63 aa). A disordered region spans residues 734-846; sequence RAREERDAQQ…RDEDFVYETP (113 aa). The segment covering 756-769 has biased composition (acidic residues); it reads PISDSEEAESEDES. Low complexity predominate over residues 773-786; the sequence is PQSPQASQARSQRS. Over residues 797–809 the composition is skewed to acidic residues; the sequence is PLIELDGNEEDEV.

The protein localises to the nucleus. In terms of biological role, putative transcriptional regulator; part of the gene cluster that mediates the biosynthesis of polyesters containing 2,4-dihydroxy-6-(2-hydroxypropyl)benzoate and 3-hydroxybutyrate moieties, such as talapolyester G, 15G256beta and 15G256beta-2; as well as to oxidized derivatives such as 15G256alpha. In Talaromyces stipitatus (strain ATCC 10500 / CBS 375.48 / QM 6759 / NRRL 1006) (Penicillium stipitatum), this protein is Putative transcriptional regulator tpeD.